The sequence spans 373 residues: Queuine tRNA-ribosyltransferase (373 aa).

The active-site Proton acceptor is the aspartate 89. Residues 89–93, aspartate 143, glutamine 185, and glycine 212 each bind substrate; that span reads DSGGF. The segment at 243 to 249 is RNA binding; the sequence is GVGRPED. Aspartate 262 (nucleophile) is an active-site residue. The RNA binding; important for wobble base 34 recognition stretch occupies residues 267–271; that stretch reads TRNAR. Cysteine 300, cysteine 302, cysteine 305, and histidine 331 together coordinate Zn(2+).

It belongs to the queuine tRNA-ribosyltransferase family. In terms of assembly, homodimer. Within each dimer, one monomer is responsible for RNA recognition and catalysis, while the other monomer binds to the replacement base PreQ1. Zn(2+) is required as a cofactor.

The enzyme catalyses 7-aminomethyl-7-carbaguanine + guanosine(34) in tRNA = 7-aminomethyl-7-carbaguanosine(34) in tRNA + guanine. The protein operates within tRNA modification; tRNA-queuosine biosynthesis. In terms of biological role, catalyzes the base-exchange of a guanine (G) residue with the queuine precursor 7-aminomethyl-7-deazaguanine (PreQ1) at position 34 (anticodon wobble position) in tRNAs with GU(N) anticodons (tRNA-Asp, -Asn, -His and -Tyr). Catalysis occurs through a double-displacement mechanism. The nucleophile active site attacks the C1' of nucleotide 34 to detach the guanine base from the RNA, forming a covalent enzyme-RNA intermediate. The proton acceptor active site deprotonates the incoming PreQ1, allowing a nucleophilic attack on the C1' of the ribose to form the product. After dissociation, two additional enzymatic reactions on the tRNA convert PreQ1 to queuine (Q), resulting in the hypermodified nucleoside queuosine (7-(((4,5-cis-dihydroxy-2-cyclopenten-1-yl)amino)methyl)-7-deazaguanosine). This Marinobacter nauticus (strain ATCC 700491 / DSM 11845 / VT8) (Marinobacter aquaeolei) protein is Queuine tRNA-ribosyltransferase.